The primary structure comprises 479 residues: FAD-dependent monooxygenase atmM (479 aa).

Residues 10–30 form a helical membrane-spanning segment; the sequence is IIVGGSVAGLTLAHCLQRAGI. Residues Glu-36, Gly-50, Arg-109, Asp-309, and Ala-322 each coordinate FAD. The helical transmembrane segment at 445 to 465 threads the bilayer; sequence WILVLLVIVVSFGLHSPELVI.

The protein belongs to the paxM FAD-dependent monooxygenase family. The cofactor is FAD.

Its subcellular location is the membrane. It participates in secondary metabolite biosynthesis. Functionally, FAD-dependent monooxygenase; part of the ATM1 gene cluster that mediates the biosynthesis of aflatrem, a tremorgenic mycotoxin with acute neurotoxic effects. Synthesis of geranylgeranyl diphosphate (GGPP) by AtmG (a GGPP synthase) precedes condensation of GGPP with indole 3-glycerol phosphate, followed by epoxidation and cyclization by AtmM (a FAD-dependent monooxygenase) and AtmC (a prenyltransferase) to produce paspaline. AtmB is also essential for paspaline production, but its exact role has not been identified yet. AtmP, a cytochrome P450 monooxygenase, subsequently converts paspaline to 13-desoxypaxilline via PC-M6 by removal of the C-30 methyl group and oxidation at C-10. AtmQ, a cytochrome P450 monooxygenase, then catalyzes the oxidation of 13-desoxypaxilline, first at C-7 to produce paspalicine and then at C-13 to form paspalinine. Finally, AtmD prenylates paspalinine to form aflatrem. This chain is FAD-dependent monooxygenase atmM, found in Aspergillus flavus.